We begin with the raw amino-acid sequence, 859 residues long: Photoactivated adenylate cyclase subunit beta-like protein ST- (859 aa).

Positions 56–149 (LRRLMYLSKS…GRMYGDWHMK (94 aa)) constitute a BLUF 1 domain. The disordered stretch occupies residues 420–444 (RPPIFDDTPKSNPRPRTPGYGGRQR). The BLUF 2 domain occupies 471 to 563 (LTTLTYISQA…RVYTSEWTLT (93 aa)). The disordered stretch occupies residues 814–859 (ARSGEQPLTEPEQAKPDFRVSPGRDRHGVSGRRSNSSQGKGSIQVG). Over residues 825–841 (EQAKPDFRVSPGRDRHG) the composition is skewed to basic and acidic residues. Over residues 845 to 859 (RRSNSSQGKGSIQVG) the composition is skewed to polar residues.

As to quaternary structure, heterotetramer of two alpha and two beta subunits.

Its subcellular location is the cell projection. The protein localises to the cilium. The protein resides in the flagellum. The protein is Photoactivated adenylate cyclase subunit beta-like protein ST- of Euglena gracilis.